The chain runs to 311 residues: Protoheme IX farnesyltransferase (311 aa).

Transmembrane regions (helical) follow at residues 30 to 50, 55 to 75, 108 to 128, 129 to 149, 153 to 173, 182 to 202, 233 to 253, and 287 to 307; these read VVQL…PGWP, WGVA…AAAF, FAVL…NALT, MWLT…LLKP, QNIV…WAAM, WILC…LALY, FVLF…WFYL, and IWHL…GPLL.

Belongs to the UbiA prenyltransferase family. Protoheme IX farnesyltransferase subfamily.

Its subcellular location is the cell inner membrane. The enzyme catalyses heme b + (2E,6E)-farnesyl diphosphate + H2O = Fe(II)-heme o + diphosphate. It functions in the pathway porphyrin-containing compound metabolism; heme O biosynthesis; heme O from protoheme: step 1/1. In terms of biological role, converts heme B (protoheme IX) to heme O by substitution of the vinyl group on carbon 2 of heme B porphyrin ring with a hydroxyethyl farnesyl side group. This is Protoheme IX farnesyltransferase from Methylibium petroleiphilum (strain ATCC BAA-1232 / LMG 22953 / PM1).